The following is a 121-amino-acid chain: MIQQETYLNVADNSGARKLMCIRVLGSNRRYAGVGDVIIAVVKDALPNMPVKKSDVVRAVVVRTKKSLRRDSGNVIRFDDNAAVIINADGNPRGTRVFGPVARELRDRNFTKIVSLAPEVI.

It belongs to the universal ribosomal protein uL14 family. In terms of assembly, part of the 50S ribosomal subunit. Forms a cluster with proteins L3 and L19. In the 70S ribosome, L14 and L19 interact and together make contacts with the 16S rRNA in bridges B5 and B8.

Binds to 23S rRNA. Forms part of two intersubunit bridges in the 70S ribosome. This Synechococcus elongatus (strain ATCC 33912 / PCC 7942 / FACHB-805) (Anacystis nidulans R2) protein is Large ribosomal subunit protein uL14.